The following is a 106-amino-acid chain: Urease subunit beta (106 aa).

It belongs to the urease beta subunit family. In terms of assembly, heterotrimer of UreA (gamma), UreB (beta) and UreC (alpha) subunits. Three heterotrimers associate to form the active enzyme.

The protein localises to the cytoplasm. It catalyses the reaction urea + 2 H2O + H(+) = hydrogencarbonate + 2 NH4(+). Its pathway is nitrogen metabolism; urea degradation; CO(2) and NH(3) from urea (urease route): step 1/1. In Citrobacter koseri (strain ATCC BAA-895 / CDC 4225-83 / SGSC4696), this protein is Urease subunit beta.